A 289-amino-acid polypeptide reads, in one-letter code: Mitochondrial fission regulator 1-like (289 aa).

The residue at position 27 (T27) is a Phosphothreonine. Phosphoserine occurs at positions 38, 100, 107, 221, 222, 235, 258, and 270.

This sequence belongs to the MTFR1 family. Phosphorylated by AMPK. Upon stress, phosphorylation by AMPK is sufficient to induce mitochondrial fragmentation.

It is found in the mitochondrion outer membrane. Functionally, mitochondrial protein required for adaptation of miochondrial dynamics to metabolic changes. Regulates mitochondrial morphology at steady state and mediates AMPK-dependent stress-induced mitochondrial fragmentation via the control of OPA1 levels. The polypeptide is Mitochondrial fission regulator 1-like (Mtfr1l) (Rattus norvegicus (Rat)).